Consider the following 206-residue polypeptide: Ras-related protein ralB-A (206 aa).

21–28 (GSGGVGKS) contributes to the GTP binding site. Positions 43–51 (YEPTKADSY) match the Effector region motif. Residues 68–72 (DTAGQ) and 128–131 (NKSD) contribute to the GTP site. The span at 180–189 (KMSENKDKNG) shows a compositional bias: basic and acidic residues. The segment at 180-206 (KMSENKDKNGKKSGKSKKGFKQRCCLL) is disordered. Residues 190-200 (KKSGKSKKGFK) are compositionally biased toward basic residues. At Cys203 the chain carries Cysteine methyl ester. Cys203 is lipidated: S-geranylgeranyl cysteine. The propeptide at 204–206 (CLL) is removed in mature form.

The protein belongs to the small GTPase superfamily. Ras family. Interacts with ralbp1 and rap1gds1. Weakly expressed in adult tissues and highest levels were found in heart, brain and testes.

It is found in the cell membrane. It localises to the midbody. It catalyses the reaction GTP + H2O = GDP + phosphate + H(+). Functionally, multifunctional GTPase involved in a variety of cellular processes including gene expression, cell migration, cell proliferation, oncogenic transformation and membrane trafficking. Accomplishes its multiple functions by interacting with distinct downstream effectors. Acts as a GTP sensor for GTP-dependent exocytosis of dense core vesicles. Required both to stabilize the assembly of the exocyst complex and to localize functional exocyst complexes to the leading edge of migrating cells. Required for suppression of apoptosis. In late stages of cytokinesis, upon completion of the bridge formation between dividing cells, mediates exocyst recruitment to the midbody to drive abscission. Regulates the actin cytoskeleton to play a role in gastrulation or neurulation. During the cleavage stages, the GTP-bound form induces a cortical reaction that affects the localization of pigment granules. Activated by the FGF pathway via ras and ral-GDS, but independently of raf. Directs ralbp1 to the plasma membrane. Involved in ligand-dependent receptor mediated endocytosis of the EGF and insulin receptors. The sequence is that of Ras-related protein ralB-A (ralb-a) from Xenopus laevis (African clawed frog).